We begin with the raw amino-acid sequence, 222 residues long: Glutathione S-transferase alpha-1 (222 aa).

M1 carries the post-translational modification N-acetylmethionine. A GST N-terminal domain is found at 3–83 (GKPVLHYFNA…YIATKYDLYG (81 aa)). K4 is subject to N6-succinyllysine. Residues Y9, K45, 54-55 (QV), and 67-68 (QT) contribute to the glutathione site. The GST C-terminal domain occupies 85–208 (DMKERALIDM…QPGSQRKLPV (124 aa)).

This sequence belongs to the GST superfamily. Alpha family. As to quaternary structure, homodimer. Homodimer or heterodimer of GSTA1 and GSTA2.

The protein resides in the cytoplasm. The catalysed reaction is RX + glutathione = an S-substituted glutathione + a halide anion + H(+). It catalyses the reaction prostaglandin A2 + glutathione = prostaglandin A2-S-(R)-glutathione. The enzyme catalyses prostaglandin J2 + glutathione = prostaglandin J2-S-(R)-glutathione. It carries out the reaction (13S)-hydroperoxy-(9Z,11E)-octadecadienoate + 2 glutathione = (13S)-hydroxy-(9Z,11E)-octadecadienoate + glutathione disulfide + H2O. The catalysed reaction is androst-5-ene-3,17-dione = androst-4-ene-3,17-dione. Its function is as follows. Glutathione S-transferase that catalyzes the nucleophilic attack of the sulfur atom of glutathione on the electrophilic groups of a wide range of exogenous and endogenous compounds. Involved in the formation of glutathione conjugates of both prostaglandin A2 (PGA2) and prostaglandin J2 (PGJ2). It also catalyzes the isomerization of D5-androstene-3,17-dione (AD) into D4-androstene-3,17-dione and may therefore play an important role in hormone biosynthesis. Through its glutathione-dependent peroxidase activity toward the fatty acid hydroperoxide (13S)-hydroperoxy-(9Z,11E)-octadecadienoate/13-HPODE it is also involved in the metabolism of oxidized linoleic acid. In Rattus norvegicus (Rat), this protein is Glutathione S-transferase alpha-1 (Gsta1).